Reading from the N-terminus, the 440-residue chain is Kinetochore protein NUF2 homolog (440 aa).

2 coiled-coil regions span residues 142-239 (LGLL…LRSQ) and 299-386 (INEQ…RQTN).

This sequence belongs to the NUF2 family. In terms of assembly, component of the NDC80 complex, which consists of NDC80, NUF2, SPC24 and SPC25.

It is found in the chromosome. Its subcellular location is the centromere. In terms of biological role, acts as a component of the essential kinetochore-associated NDC80 complex, which is required for chromosome segregation and spindle checkpoint activity to ensure proper cell division. The polypeptide is Kinetochore protein NUF2 homolog (Arabidopsis thaliana (Mouse-ear cress)).